The primary structure comprises 20 residues: Dermaseptin-N1 (20 aa).

Leucine amide is present on Leu-20.

In terms of tissue distribution, expressed by the skin glands.

It localises to the secreted. Functionally, antimicrobial peptide with moderate activity against both Gram-positive and Gram-negative bacteria, and important activity against Leishmania species (L.amazonensis and L.infantum). Acts on both Leishmania promastigote and amastigote forms. Shows activity against E.coli (MIC=17.8 uM), S.aureus (MIC=32.3 uM) and the phytopathogenic bacterium Xanthomonas axonopodis (MIC=2 uM). Shows low cytotoxicity against mammalian cells in models of peritoneal macrophages. This chain is Dermaseptin-N1, found in Pithecopus nordestinus (Northeastern Brazilian leaf frog).